The sequence spans 65 residues: Muscarinic toxin 3 (65 aa).

4 disulfide bridges follow: Cys3-Cys24, Cys17-Cys42, Cys46-Cys57, and Cys58-Cys63.

Belongs to the three-finger toxin family. Short-chain subfamily. Aminergic toxin sub-subfamily. Expressed by the venom gland.

It localises to the secreted. Functionally, potent antagonist (IC(50)=1-10 nM) of M4 (CHRM4) muscarinic receptors, and CHRM1, ADRA1A, ADRA2A and ADRA2C adrenergic receptors. Also antagonises ADRA1B and ADRA1D adrenergic receptors with a 10-times lower affinity. This is Muscarinic toxin 3 from Dendroaspis angusticeps (Eastern green mamba).